The following is a 352-amino-acid chain: uncharacterized protein (352 aa).

Helical transmembrane passes span 6–26, 30–50, 76–96, 151–171, 197–217, 226–246, 291–311, and 330–350; these read FIFL…IINP, FHIV…IINI, IFLT…FVII, EFII…LPFL, FILV…LPLI, VKVD…IEGL, WLPI…ASFA, and LIGG…AKIF.

It belongs to the CitM (TC 2.A.11) transporter family.

The protein localises to the cell membrane. This is an uncharacterized protein from Methanocaldococcus jannaschii (strain ATCC 43067 / DSM 2661 / JAL-1 / JCM 10045 / NBRC 100440) (Methanococcus jannaschii).